The sequence spans 845 residues: Protein P (845 aa).

The segment at 1 to 179 (MPLSYQHFRK…FCGSPYSWEQ (179 aa)) is terminal protein domain (TP). Positions 180–348 (ELHHGRLVIK…YCLSHLVNLL (169 aa)) are spacer. The polymerase/reverse transcriptase domain (RT) stretch occupies residues 349-692 (EDWGPCTEHG…YMNLYPVARQ (344 aa)). One can recognise a Reverse transcriptase domain in the interval 359–602 (EHHIRIPRTP…YSLNFMGYVI (244 aa)). Residues Asp431, Asp553, and Asp554 each coordinate Mg(2+).

Belongs to the hepadnaviridae P protein family.

The enzyme catalyses DNA(n) + a 2'-deoxyribonucleoside 5'-triphosphate = DNA(n+1) + diphosphate. It carries out the reaction Endonucleolytic cleavage to 5'-phosphomonoester.. Activated by host HSP70 and HSP40 in vitro to be able to bind the epsilon loop of the pgRNA. Because deletion of the RNase H region renders the protein partly chaperone-independent, the chaperones may be needed indirectly to relieve occlusion of the RNA-binding site by this domain. Inhibited by several reverse-transcriptase inhibitors: Lamivudine, Adefovir and Entecavir. Multifunctional enzyme that converts the viral RNA genome into dsDNA in viral cytoplasmic capsids. This enzyme displays a DNA polymerase activity that can copy either DNA or RNA templates, and a ribonuclease H (RNase H) activity that cleaves the RNA strand of RNA-DNA heteroduplexes in a partially processive 3'- to 5'-endonucleasic mode. Neo-synthesized pregenomic RNA (pgRNA) are encapsidated together with the P protein, and reverse-transcribed inside the nucleocapsid. Initiation of reverse-transcription occurs first by binding the epsilon loop on the pgRNA genome, and is initiated by protein priming, thereby the 5'-end of (-)DNA is covalently linked to P protein. Partial (+)DNA is synthesized from the (-)DNA template and generates the relaxed circular DNA (RC-DNA) genome. After budding and infection, the RC-DNA migrates in the nucleus, and is converted into a plasmid-like covalently closed circular DNA (cccDNA). The activity of P protein does not seem to be necessary for cccDNA generation, and is presumably released from (+)DNA by host nuclear DNA repair machinery. The chain is Protein P from Homo sapiens (Human).